Reading from the N-terminus, the 431-residue chain is Fumarylacetoacetase (431 aa).

Asp-133 provides a ligand contact to Ca(2+). Tyr-135 lines the substrate pocket. Catalysis depends on His-140, which acts as the Proton acceptor. Arg-149 serves as a coordination point for substrate. Residues Glu-209, Glu-211, and Asp-243 each contribute to the Ca(2+) site. A Mg(2+)-binding site is contributed by Asp-243. 2 residues coordinate substrate: Gln-250 and Tyr-254. Mg(2+)-binding residues include Lys-263 and Thr-267. Residue Thr-362 participates in substrate binding.

It belongs to the FAH family. The cofactor is Ca(2+). Mg(2+) is required as a cofactor.

It catalyses the reaction 4-fumarylacetoacetate + H2O = acetoacetate + fumarate + H(+). Its pathway is amino-acid degradation; L-phenylalanine degradation; acetoacetate and fumarate from L-phenylalanine: step 6/6. Its function is as follows. Use of phenylalanine and phenylacetate as a carbon source. In Emericella nidulans (strain FGSC A4 / ATCC 38163 / CBS 112.46 / NRRL 194 / M139) (Aspergillus nidulans), this protein is Fumarylacetoacetase (fahA).